A 271-amino-acid chain; its full sequence is ATP-dependent Clp protease proteolytic subunit 6, chloroplastic (271 aa).

The interval 1 to 30 (MAGLAISPPLGLSFSSRTRNPKPTSFLSHN) is disordered. A chloroplast-targeting transit peptide spans 1 to 77 (MAGLAISPPL…KAPRFGVIEA (77 aa)). Polar residues predominate over residues 13–30 (SFSSRTRNPKPTSFLSHN). Ser-175 functions as the Nucleophile in the catalytic mechanism. His-200 is a catalytic residue.

This sequence belongs to the peptidase S14 family. In terms of assembly, component of the chloroplastic Clp protease core complex which consist of at least 16 proteins: CLPP4 (3 copies), CLPP5 (3 copies), CLPR4 (2 copies), ClpP1 (1 copy), CLPP6 (1 copy), CLPR2 (1 copy), CLPT1 (1 copy), CLPT2 (1 copy) and 3 copies of CLPP3 and/or CLPR1 and/or CLPR3. The core complex is organized in two heptameric rings, one containing CLPP3,4,5,6 in a 1:2:3:1 ratio and the other CLPP1 and CLPR1,2,3,4 in a 3:1:1:1:1 ratio. As to expression, mostly expressed in leaves. Also detected in stems, and to a lower extent, in roots (at protein level).

It localises to the plastid. Its subcellular location is the chloroplast stroma. The catalysed reaction is Hydrolysis of proteins to small peptides in the presence of ATP and magnesium. alpha-casein is the usual test substrate. In the absence of ATP, only oligopeptides shorter than five residues are hydrolyzed (such as succinyl-Leu-Tyr-|-NHMec, and Leu-Tyr-Leu-|-Tyr-Trp, in which cleavage of the -Tyr-|-Leu- and -Tyr-|-Trp bonds also occurs).. Cleaves peptides in various proteins in a process that requires ATP hydrolysis. Has a chymotrypsin-like activity. Plays a major role in the degradation of misfolded proteins. Essential protein required for chloroplast development and integrity. This chain is ATP-dependent Clp protease proteolytic subunit 6, chloroplastic, found in Arabidopsis thaliana (Mouse-ear cress).